Consider the following 72-residue polypeptide: Gas vesicle protein A (72 aa).

It belongs to the gas vesicle GvpA family. As to quaternary structure, the gas vesicle shell is 2 nm thick and consists of a single layer of this protein. It forms helical ribs nearly perpendicular to the long axis of the vesicle.

It localises to the gas vesicle shell. In terms of biological role, gas vesicles are hollow, gas filled proteinaceous nanostructures found in some microorganisms. During planktonic growth they allow positioning of the organism at a favorable depth for light or nutrient acquisition. GvpA forms the protein shell. The protein is Gas vesicle protein A of Pseudanabaena galeata (strain PCC 6901).